A 205-amino-acid polypeptide reads, in one-letter code: MTTQYGFFIDSSRCTGCKTCELACKDFKDLGPEVSFRRIYEYAGGDWQEDNGVWHQNVFAYYLSISCNHCDDPACTKVCPSGAMHKREDGFVVVDEDVCIGCRYCHMACPYGAPQYNAEKGHMTKCDGCYSRVAEGKQPICVESCPLRALEFGPIEELRQKHGTLAAVAPLPRAHFTKPNIVIKPNANSRPTGDTTGYLANPEEV.

3 4Fe-4S ferredoxin-type domains span residues 5–33 (YGFF…LGPE), 59–89 (FAYY…KRED), and 90–119 (GFVV…YNAE). [4Fe-4S] cluster-binding residues include C14, C17, C20, C24, C67, C70, C75, C79, C99, C102, C105, C109, C126, C129, C141, and C145. Residues 183–205 (IKPNANSRPTGDTTGYLANPEEV) are disordered. Residues 186–195 (NANSRPTGDT) are compositionally biased toward polar residues.

As to quaternary structure, the complex consists of three subunits: YnfF, the reductase; YnfG, an electron transfer protein, and YnfH, a membrane anchor protein. [4Fe-4S] cluster serves as cofactor.

Functionally, electron transfer subunit of the terminal reductase during anaerobic growth on various sulfoxide and N-oxide compounds. This Escherichia coli O6:H1 (strain CFT073 / ATCC 700928 / UPEC) protein is Probable anaerobic dimethyl sulfoxide reductase chain YnfG (ynfG).